The primary structure comprises 229 residues: Orotidine 5'-phosphate decarboxylase (229 aa).

Residues Asp-11, Lys-33, 60–69, Thr-119, Arg-180, Gln-189, Gly-209, and Arg-210 each bind substrate; that span reads DLKFHDIPNT. The active-site Proton donor is Lys-62.

The protein belongs to the OMP decarboxylase family. Type 1 subfamily. As to quaternary structure, homodimer.

The catalysed reaction is orotidine 5'-phosphate + H(+) = UMP + CO2. Its pathway is pyrimidine metabolism; UMP biosynthesis via de novo pathway; UMP from orotate: step 2/2. Functionally, catalyzes the decarboxylation of orotidine 5'-monophosphate (OMP) to uridine 5'-monophosphate (UMP). The polypeptide is Orotidine 5'-phosphate decarboxylase (Dichelobacter nodosus (strain VCS1703A)).